We begin with the raw amino-acid sequence, 795 residues long: Antibiotic resistant DNA gyrase subunit B (795 aa).

A Toprim domain is found at 421 to 536 (SELYLVEGNS…RGYIYIAQPP (116 aa)). Residues Glu-427, Asp-501, and Asp-503 each contribute to the Mg(2+) site.

This sequence belongs to the type II topoisomerase GyrB family. In terms of assembly, heterotetramer, composed of two GyrA and two GyrB chains. In the heterotetramer, GyrA contains the active site tyrosine that forms a transient covalent intermediate with DNA, while GyrB binds cofactors and catalyzes ATP hydrolysis. Mg(2+) is required as a cofactor. Requires Mn(2+) as cofactor. It depends on Ca(2+) as a cofactor.

It is found in the cytoplasm. It catalyses the reaction ATP-dependent breakage, passage and rejoining of double-stranded DNA.. A type II topoisomerase that negatively supercoils closed circular double-stranded (ds) DNA in an ATP-dependent manner to modulate DNA topology and maintain chromosomes in an underwound state. Negative supercoiling favors strand separation, and DNA replication, transcription, recombination and repair, all of which involve strand separation. Also able to catalyze the interconversion of other topological isomers of dsDNA rings, including catenanes and knotted rings. Type II topoisomerases break and join 2 DNA strands simultaneously in an ATP-dependent manner. The sequence is that of Antibiotic resistant DNA gyrase subunit B from Neisseria gonorrhoeae.